The following is a 216-amino-acid chain: Acyl-homoserine-lactone synthase (216 aa).

This sequence belongs to the autoinducer synthase family.

The enzyme catalyses a fatty acyl-[ACP] + S-adenosyl-L-methionine = an N-acyl-L-homoserine lactone + S-methyl-5'-thioadenosine + holo-[ACP] + H(+). Functionally, required for the synthesis of an acyl-HSL autoinducer that binds to YukR and which is involved in the regulation of motility and morphology. The chain is Acyl-homoserine-lactone synthase (yukI) from Yersinia ruckeri.